Here is a 546-residue protein sequence, read N- to C-terminus: Chaperonin GroEL 1 (546 aa).

Residues 30-33, K51, 87-91, G415, 479-481, and D495 each bind ATP; these read TLGP, DGTTT, and NAA. The segment at 526-546 is disordered; that stretch reads KEDAPMPGGMPGGMGGMGMDM. The span at 534–546 shows a compositional bias: gly residues; the sequence is GMPGGMGGMGMDM.

The protein belongs to the chaperonin (HSP60) family. Forms a cylinder of 14 subunits composed of two heptameric rings stacked back-to-back. Interacts with the co-chaperonin GroES.

Its subcellular location is the cytoplasm. The enzyme catalyses ATP + H2O + a folded polypeptide = ADP + phosphate + an unfolded polypeptide.. Functionally, together with its co-chaperonin GroES, plays an essential role in assisting protein folding. The GroEL-GroES system forms a nano-cage that allows encapsulation of the non-native substrate proteins and provides a physical environment optimized to promote and accelerate protein folding. The sequence is that of Chaperonin GroEL 1 from Burkholderia pseudomallei (strain 1106a).